Reading from the N-terminus, the 300-residue chain is ATP-dependent (S)-NAD(P)H-hydrate dehydratase (300 aa).

The YjeF C-terminal domain occupies 7–289 (IEARLKSIIP…ESIPSVFDQV (283 aa)). Residues Gly107 and 160-166 (NVMEYRR) contribute to the (6S)-NADPHX site. Residues 194-198 (KGQVD) and 213-222 (GSPRRCGGQG) contribute to the ATP site. Residue Asp223 coordinates (6S)-NADPHX.

This sequence belongs to the NnrD/CARKD family. The cofactor is Mg(2+).

It carries out the reaction (6S)-NADHX + ATP = ADP + phosphate + NADH + H(+). The enzyme catalyses (6S)-NADPHX + ATP = ADP + phosphate + NADPH + H(+). Functionally, catalyzes the dehydration of the S-form of NAD(P)HX at the expense of ATP, which is converted to ADP. Together with NAD(P)HX epimerase, which catalyzes the epimerization of the S- and R-forms, the enzyme allows the repair of both epimers of NAD(P)HX, a damaged form of NAD(P)H that is a result of enzymatic or heat-dependent hydration. This Entamoeba histolytica (strain ATCC 30459 / HM-1:IMSS / ABRM) protein is ATP-dependent (S)-NAD(P)H-hydrate dehydratase.